A 31-amino-acid chain; its full sequence is Cytochrome b6-f complex subunit 6 (31 aa).

Residues 7–25 traverse the membrane as a helical segment; that stretch reads YSGFLLAAPIPASAPFTGL.

This sequence belongs to the PetL family. In terms of assembly, the 4 large subunits of the cytochrome b6-f complex are cytochrome b6, subunit IV (17 kDa polypeptide, PetD), cytochrome f and the Rieske protein, while the 4 small subunits are PetG, PetL, PetM and PetN. The complex functions as a dimer.

The protein localises to the plastid. The protein resides in the chloroplast thylakoid membrane. Functionally, component of the cytochrome b6-f complex, which mediates electron transfer between photosystem II (PSII) and photosystem I (PSI), cyclic electron flow around PSI, and state transitions. PetL is important for photoautotrophic growth as well as for electron transfer efficiency and stability of the cytochrome b6-f complex. This is Cytochrome b6-f complex subunit 6 from Huperzia lucidula (Shining clubmoss).